A 127-amino-acid chain; its full sequence is Major sperm protein 152 (127 aa).

Position 2 is an N-acetylthreonine (threonine 2). The 118-residue stretch at 9–126 folds into the MSP domain; that stretch reads DIQTQPGTKI…RRKNLPIEYN (118 aa).

As to expression, sperm.

It is found in the cell projection. Its subcellular location is the pseudopodium. It localises to the cytoplasm. The protein resides in the cytoskeleton. Its function is as follows. Central component in molecular interactions underlying sperm crawling. Forms an extensive filament system that extends from sperm villipoda, along the leading edge of the pseudopod. The chain is Major sperm protein 152 (msp-152) from Caenorhabditis elegans.